A 419-amino-acid chain; its full sequence is Protein-lysine N-methyltransferase EFM2 (419 aa).

S-adenosyl-L-methionine-binding positions include Trp222, 261–263, Asp290, Trp318, and Ala340; that span reads GAG.

This sequence belongs to the class I-like SAM-binding methyltransferase superfamily. METTL21 family.

It localises to the cytoplasm. Functionally, S-adenosyl-L-methionine-dependent protein-lysine N-methyltransferase that mono- and dimethylates elongation factor 2 (EFT1/EFT2) at 'Lys-613' and methylates elongation factor 3A (YEF3). The chain is Protein-lysine N-methyltransferase EFM2 from Saccharomyces cerevisiae (strain ATCC 204508 / S288c) (Baker's yeast).